The sequence spans 464 residues: Argininosuccinate lyase (464 aa).

This sequence belongs to the lyase 1 family. Argininosuccinate lyase subfamily.

It is found in the cytoplasm. The catalysed reaction is 2-(N(omega)-L-arginino)succinate = fumarate + L-arginine. It participates in amino-acid biosynthesis; L-arginine biosynthesis; L-arginine from L-ornithine and carbamoyl phosphate: step 3/3. This Alcanivorax borkumensis (strain ATCC 700651 / DSM 11573 / NCIMB 13689 / SK2) protein is Argininosuccinate lyase.